A 193-amino-acid chain; its full sequence is Heat shock protein beta-1 (193 aa).

Phosphoserine is present on residues serine 15 and serine 80. The sHSP domain maps to 74-182; sequence RALSELSSGI…QSSEITIPVT (109 aa).

Belongs to the small heat shock protein (HSP20) family. As to quaternary structure, homooligomer. Homodimer; becomes monomeric upon activation. Heterooligomer. Smooth, cardiac and skeletal muscle, hardly detectable in fibroblasts or focal contacts.

Its subcellular location is the cytoplasm. The protein resides in the nucleus. It is found in the cytoskeleton. It localises to the spindle. Functionally, small heat shock protein which functions as a molecular chaperone probably maintaining denatured proteins in a folding-competent state. Plays a role in stress resistance and actin organization. This Gallus gallus (Chicken) protein is Heat shock protein beta-1 (HSPB1).